The following is a 295-amino-acid chain: Tissue factor (295 aa).

Positions 1-32 (METPAWPRVPRPETAVARTLLLGWVFAQVAGA) are cleaved as a signal peptide. The Extracellular segment spans residues 33–251 (SGTTNTVAAY…MGQEKGEFRE (219 aa)). 2 short sequence motifs (WKS motif) span residues 46-48 (WKS) and 77-79 (WKS). Cys-81 and Cys-89 are disulfide-bonded. N-linked (GlcNAc...) asparagine glycans are attached at residues Asn-156 and Asn-169. A WKS motif motif is present at residues 190-192 (WKS). A disulfide bond links Cys-218 and Cys-241. A helical transmembrane segment spans residues 252–274 (IFYIIGAVVFVVIILVIILAISL). Residues 275 to 295 (HKCRKAGVGQSWKENSPLNVS) are Cytoplasmic-facing. Cys-277 carries the S-palmitoyl cysteine lipid modification.

It belongs to the tissue factor family. As to quaternary structure, interacts with HSPE; the interaction, inhibited by heparin, promotes the generation of activated factor X and activates coagulation in the presence of activated factor VII. As to expression, lung, placenta and pancreas.

It localises to the membrane. The protein resides in the secreted. In terms of biological role, initiates blood coagulation by forming a complex with circulating factor VII or VIIa. The [TF:VIIa] complex activates factors IX or X by specific limited proteolysis. TF plays a role in normal hemostasis by initiating the cell-surface assembly and propagation of the coagulation protease cascade. The protein is Tissue factor (F3) of Homo sapiens (Human).